A 457-amino-acid chain; its full sequence is Multidrug resistance protein MdtK (457 aa).

Transmembrane regions (helical) follow at residues 11–31, 53–73, 93–113, 127–147, 160–180, 189–209, 243–263, 276–296, 314–334, 350–370, 387–407, and 418–438; these read LLAL…MGFV, IWLP…PVIA, WLAG…GYII, AVGY…FQVA, GMVM…IFIY, GGVG…LAMV, LPIA…ALLV, IALN…AAVT, AART…IFTV, VVTL…SDSI, IFYI…YILA, and PAGF…MMML.

Belongs to the multi antimicrobial extrusion (MATE) (TC 2.A.66.1) family. MdtK subfamily.

The protein resides in the cell inner membrane. In terms of biological role, multidrug efflux pump that functions probably as a Na(+)/drug antiporter. The sequence is that of Multidrug resistance protein MdtK from Escherichia coli O139:H28 (strain E24377A / ETEC).